Here is a 118-residue protein sequence, read N- to C-terminus: UPF0125 protein RSc1426 (118 aa).

The protein belongs to the UPF0125 (RnfH) family.

The polypeptide is UPF0125 protein RSc1426 (Ralstonia nicotianae (strain ATCC BAA-1114 / GMI1000) (Ralstonia solanacearum)).